A 230-amino-acid chain; its full sequence is MLRNCAMRLRTLGATPARRPGAARRLFSSEKVIRKDYALPNPSWTKDLRLLFDQFMKKCEDGSWKRMPSHRQNPTRAIQEFQTLFVDSKFKKEEQMSKAQQFTRSFEEGLGFEYAMFYNKVEKRTVSLFQGGLHLQGVPGFVHGGAIATIIDVTTGTCAISEGVAMTANLNITYKKPIPLLSVVVVNSQLQKIEGRKLFVSCTIQSIDEKTLYTEATALFIKLDPEKPLT.

The N-terminal 27 residues, 1–27, are a transit peptide targeting the mitochondrion; the sequence is MLRNCAMRLRTLGATPARRPGAARRLF. Residues serine 28 and serine 29 each carry the phosphoserine modification. Lysine 46 and lysine 57 each carry N6-succinyllysine. Lysine 65 is modified (N6-acetyllysine). An N6-succinyllysine mark is found at lysine 89 and lysine 98. Aspartate 152 acts as the Proton donor/acceptor in catalysis. Residues lysine 175 and 196–197 contribute to the substrate site; that span reads RK. Lysine 197 is subject to N6-succinyllysine.

This sequence belongs to the THEM4/THEM5 thioesterase family. As to quaternary structure, homodimer and homotetramer. Interacts with AKT1 in the cytosol. In terms of assembly, (Microbial infection) Interacts with V-AKT from AKT8 murine leukemia virus. Phosphorylated.

Its subcellular location is the cell membrane. It is found in the cell projection. The protein resides in the ruffle membrane. The protein localises to the cytoplasm. It localises to the mitochondrion. Its subcellular location is the mitochondrion inner membrane. It is found in the mitochondrion intermembrane space. The catalysed reaction is hexadecanoyl-CoA + H2O = hexadecanoate + CoA + H(+). It carries out the reaction octanoyl-CoA + H2O = octanoate + CoA + H(+). The enzyme catalyses decanoyl-CoA + H2O = decanoate + CoA + H(+). It catalyses the reaction dodecanoyl-CoA + H2O = dodecanoate + CoA + H(+). The catalysed reaction is tetradecanoyl-CoA + H2O = tetradecanoate + CoA + H(+). It carries out the reaction (9Z)-octadecenoyl-CoA + H2O = (9Z)-octadecenoate + CoA + H(+). The enzyme catalyses (5Z,8Z,11Z,14Z)-eicosatetraenoyl-CoA + H2O = (5Z,8Z,11Z,14Z)-eicosatetraenoate + CoA + H(+). Has acyl-CoA thioesterase activity towards medium and long-chain (C14 to C18) fatty acyl-CoA substrates, and probably plays a role in mitochondrial fatty acid metabolism. Plays a role in the apoptotic process, possibly via its regulation of AKT1 activity. This chain is Acyl-coenzyme A thioesterase THEM4 (Them4), found in Mus musculus (Mouse).